We begin with the raw amino-acid sequence, 369 residues long: 1-aminocyclopropane-1-carboxylate oxidase homolog 2 (369 aa).

In terms of domain architecture, Fe2OG dioxygenase spans 217-318 (KGLRMLCHYF…VSVACFFHTH (102 aa)). Fe cation contacts are provided by histidine 241, aspartate 243, and histidine 297.

The protein belongs to the iron/ascorbate-dependent oxidoreductase family. Requires Fe cation as cofactor.

The protein is 1-aminocyclopropane-1-carboxylate oxidase homolog 2 of Arabidopsis thaliana (Mouse-ear cress).